The sequence spans 208 residues: dITP/XTP pyrophosphatase (208 aa).

16–21 (SNNKGK) contacts substrate. The Proton acceptor role is filled by Asp79. Residue Asp79 coordinates Mg(2+). Residues Ser80, 166–169 (FGYD), Lys189, and 194–195 (HR) contribute to the substrate site.

The protein belongs to the HAM1 NTPase family. Homodimer. The cofactor is Mg(2+).

The enzyme catalyses XTP + H2O = XMP + diphosphate + H(+). The catalysed reaction is dITP + H2O = dIMP + diphosphate + H(+). It catalyses the reaction ITP + H2O = IMP + diphosphate + H(+). Its function is as follows. Pyrophosphatase that catalyzes the hydrolysis of nucleoside triphosphates to their monophosphate derivatives, with a high preference for the non-canonical purine nucleotides XTP (xanthosine triphosphate), dITP (deoxyinosine triphosphate) and ITP. Seems to function as a house-cleaning enzyme that removes non-canonical purine nucleotides from the nucleotide pool, thus preventing their incorporation into DNA/RNA and avoiding chromosomal lesions. In Acinetobacter baumannii (strain ACICU), this protein is dITP/XTP pyrophosphatase.